The primary structure comprises 88 residues: Small ribosomal subunit protein uS17 (88 aa).

The protein belongs to the universal ribosomal protein uS17 family. As to quaternary structure, part of the 30S ribosomal subunit.

One of the primary rRNA binding proteins, it binds specifically to the 5'-end of 16S ribosomal RNA. The polypeptide is Small ribosomal subunit protein uS17 (Prochlorococcus marinus (strain MIT 9515)).